We begin with the raw amino-acid sequence, 574 residues long: Proline--tRNA ligase (574 aa).

Belongs to the class-II aminoacyl-tRNA synthetase family. ProS type 1 subfamily. Homodimer.

It localises to the cytoplasm. It carries out the reaction tRNA(Pro) + L-proline + ATP = L-prolyl-tRNA(Pro) + AMP + diphosphate. In terms of biological role, catalyzes the attachment of proline to tRNA(Pro) in a two-step reaction: proline is first activated by ATP to form Pro-AMP and then transferred to the acceptor end of tRNA(Pro). As ProRS can inadvertently accommodate and process non-cognate amino acids such as alanine and cysteine, to avoid such errors it has two additional distinct editing activities against alanine. One activity is designated as 'pretransfer' editing and involves the tRNA(Pro)-independent hydrolysis of activated Ala-AMP. The other activity is designated 'posttransfer' editing and involves deacylation of mischarged Ala-tRNA(Pro). The misacylated Cys-tRNA(Pro) is not edited by ProRS. The polypeptide is Proline--tRNA ligase (Nitrosococcus oceani (strain ATCC 19707 / BCRC 17464 / JCM 30415 / NCIMB 11848 / C-107)).